The sequence spans 453 residues: Pup--protein ligase (453 aa).

Glu-9 contributes to the Mg(2+) binding site. Arg-53 lines the ATP pocket. Residue Tyr-55 coordinates Mg(2+). Catalysis depends on Asp-57, which acts as the Proton acceptor. Glu-63 is a binding site for Mg(2+). ATP is bound by residues Thr-66 and Trp-420.

It belongs to the Pup ligase/Pup deamidase family. Pup-conjugating enzyme subfamily.

It carries out the reaction ATP + [prokaryotic ubiquitin-like protein]-L-glutamate + [protein]-L-lysine = ADP + phosphate + N(6)-([prokaryotic ubiquitin-like protein]-gamma-L-glutamyl)-[protein]-L-lysine.. It functions in the pathway protein degradation; proteasomal Pup-dependent pathway. Its pathway is protein modification; protein pupylation. Catalyzes the covalent attachment of the prokaryotic ubiquitin-like protein modifier Pup to the proteasomal substrate proteins, thereby targeting them for proteasomal degradation. This tagging system is termed pupylation. The ligation reaction involves the side-chain carboxylate of the C-terminal glutamate of Pup and the side-chain amino group of a substrate lysine. The chain is Pup--protein ligase from Streptomyces griseus subsp. griseus (strain JCM 4626 / CBS 651.72 / NBRC 13350 / KCC S-0626 / ISP 5235).